The chain runs to 375 residues: Anhydro-N-acetylmuramic acid kinase (375 aa).

12–19 (GTSLDGVD) contributes to the ATP binding site.

The protein belongs to the anhydro-N-acetylmuramic acid kinase family.

It catalyses the reaction 1,6-anhydro-N-acetyl-beta-muramate + ATP + H2O = N-acetyl-D-muramate 6-phosphate + ADP + H(+). The protein operates within amino-sugar metabolism; 1,6-anhydro-N-acetylmuramate degradation. It functions in the pathway cell wall biogenesis; peptidoglycan recycling. Its function is as follows. Catalyzes the specific phosphorylation of 1,6-anhydro-N-acetylmuramic acid (anhMurNAc) with the simultaneous cleavage of the 1,6-anhydro ring, generating MurNAc-6-P. Is required for the utilization of anhMurNAc either imported from the medium or derived from its own cell wall murein, and thus plays a role in cell wall recycling. This Mannheimia succiniciproducens (strain KCTC 0769BP / MBEL55E) protein is Anhydro-N-acetylmuramic acid kinase.